The following is a 93-amino-acid chain: Putative pterin-4-alpha-carbinolamine dehydratase (93 aa).

Belongs to the pterin-4-alpha-carbinolamine dehydratase family.

The enzyme catalyses (4aS,6R)-4a-hydroxy-L-erythro-5,6,7,8-tetrahydrobiopterin = (6R)-L-erythro-6,7-dihydrobiopterin + H2O. The sequence is that of Putative pterin-4-alpha-carbinolamine dehydratase from Nostoc punctiforme (strain ATCC 29133 / PCC 73102).